Reading from the N-terminus, the 213-residue chain is Kynurenine formamidase (213 aa).

W18 is a binding site for substrate. The Zn(2+) site is built by H48, H52, and D54. H58 (proton donor/acceptor) is an active-site residue. Zn(2+)-binding residues include H160 and E172.

This sequence belongs to the Cyclase 1 superfamily. KynB family. As to quaternary structure, homodimer. The cofactor is Zn(2+).

The catalysed reaction is N-formyl-L-kynurenine + H2O = L-kynurenine + formate + H(+). The protein operates within amino-acid degradation; L-tryptophan degradation via kynurenine pathway; L-kynurenine from L-tryptophan: step 2/2. Functionally, catalyzes the hydrolysis of N-formyl-L-kynurenine to L-kynurenine, the second step in the kynurenine pathway of tryptophan degradation. The protein is Kynurenine formamidase of Burkholderia pseudomallei (strain 1106a).